The following is a 122-amino-acid chain: Large ribosomal subunit protein uL14 (122 aa).

This sequence belongs to the universal ribosomal protein uL14 family. Part of the 50S ribosomal subunit. Forms a cluster with proteins L3 and L19. In the 70S ribosome, L14 and L19 interact and together make contacts with the 16S rRNA in bridges B5 and B8.

Functionally, binds to 23S rRNA. Forms part of two intersubunit bridges in the 70S ribosome. The chain is Large ribosomal subunit protein uL14 from Herminiimonas arsenicoxydans.